Consider the following 197-residue polypeptide: Protein FAM219B (197 aa).

Disordered regions lie at residues 1–77 and 117–142; these read MATE…HRDH and DENL…YSSA. 3 positions are modified to phosphoserine: serine 14, serine 125, and serine 127.

This sequence belongs to the FAM219 family.

The sequence is that of Protein FAM219B (Fam219b) from Mus musculus (Mouse).